A 137-amino-acid chain; its full sequence is MMQPKKTKFRKAHKGRIHGVASSGATLSFGQFGLKAMAPERITARQIEAARRALTRHMKRAGRVWIRIFPDVPVSKKPAEVRMGSGKGSPELWVARVKPGRVIFEIDGVNLQIAREALTLAAAKLPIKTRFVARIAE.

It belongs to the universal ribosomal protein uL16 family. As to quaternary structure, part of the 50S ribosomal subunit.

Binds 23S rRNA and is also seen to make contacts with the A and possibly P site tRNAs. The chain is Large ribosomal subunit protein uL16 from Rhodopseudomonas palustris (strain BisA53).